Here is a 200-residue protein sequence, read N- to C-terminus: Peroxiredoxin (200 aa).

Residues Ala6 to His165 enclose the Thioredoxin domain. Cys52 (cysteine sulfenic acid (-SOH) intermediate) is an active-site residue.

It belongs to the peroxiredoxin family. AhpC/Prx1 subfamily. Homodimer; disulfide-linked, upon oxidation.

The enzyme catalyses a hydroperoxide + [thioredoxin]-dithiol = an alcohol + [thioredoxin]-disulfide + H2O. Its function is as follows. Thiol-specific peroxidase that catalyzes the reduction of hydrogen peroxide and organic hydroperoxides to water and alcohols, respectively. Plays a role in cell protection against oxidative stress by detoxifying peroxides and as sensor of hydrogen peroxide-mediated signaling events. The sequence is that of Peroxiredoxin from Cynops pyrrhogaster (Japanese fire-bellied newt).